The chain runs to 433 residues: Protein translocase subunit SecY (433 aa).

10 helical membrane-spanning segments follow: residues 17-37 (IVFT…PIPG), 71-91 (IFAL…LMSV), 117-137 (LTVL…ESIV), 141-161 (GPVV…TLVV), 184-204 (LIIF…MFEL), 212-232 (PLIA…IIFF), 268-288 (GVIP…LANF), 310-330 (YILL…AIVF), 366-386 (LTVI…LLMN), and 388-408 (YVIS…VVLD).

Belongs to the SecY/SEC61-alpha family. In terms of assembly, component of the Sec protein translocase complex. Heterotrimer consisting of SecY, SecE and SecG subunits. The heterotrimers can form oligomers, although 1 heterotrimer is thought to be able to translocate proteins. Interacts with the ribosome. Interacts with SecDF, and other proteins may be involved. Interacts with SecA.

It localises to the cell inner membrane. Functionally, the central subunit of the protein translocation channel SecYEG. Consists of two halves formed by TMs 1-5 and 6-10. These two domains form a lateral gate at the front which open onto the bilayer between TMs 2 and 7, and are clamped together by SecE at the back. The channel is closed by both a pore ring composed of hydrophobic SecY resides and a short helix (helix 2A) on the extracellular side of the membrane which forms a plug. The plug probably moves laterally to allow the channel to open. The ring and the pore may move independently. The protein is Protein translocase subunit SecY of Rickettsia conorii (strain ATCC VR-613 / Malish 7).